Here is a 587-residue protein sequence, read N- to C-terminus: Heavy metal-associated isoprenylated plant protein 33 (587 aa).

The HMA domain maps to 9–72 (IQTCVLKVNI…KLLKSGKHAE (64 aa)). Residues C20 and C23 each coordinate a metal cation. 5 disordered regions span residues 98–146 (QIDH…MVIP), 176–261 (LKLP…KPMM), 287–449 (AHKN…PMSN), 462–504 (PGGG…QQQQ), and 532–587 (YARP…CNIM). Composition is skewed to gly residues over residues 104-113 (KGGGGGGGGP) and 121-140 (KIGGGGGGGGGGGGGGGGGP). A compositionally biased stretch (low complexity) spans 194–208 (PMNKNPQMPNNPNQK). Positions 215–248 (PDDDDEEDFSDEFDDEFDEDDDEFDDDLEDDEFD) are enriched in acidic residues. Composition is skewed to gly residues over residues 290 to 300 (NGGGPGPAGGK), 312 to 419 (MGGG…GGGP), and 428 to 445 (GAMGGPMGSLPQMGGGPG). Over residues 471–483 (SAEAPPGYFQGQV) the composition is skewed to low complexity. Pro residues-rich tracts occupy residues 534–547 (RPPPAVNYMPPQPQ) and 554–565 (YPYPYPYPPQYP). Over residues 578–587 (DENTSSCNIM) the composition is skewed to polar residues. Position 584 is a cysteine methyl ester (C584). A lipid anchor (S-farnesyl cysteine) is attached at C584. The propeptide at 585-587 (NIM) is removed in mature form.

It belongs to the HIPP family.

Its function is as follows. Heavy-metal-binding protein. The protein is Heavy metal-associated isoprenylated plant protein 33 of Arabidopsis thaliana (Mouse-ear cress).